We begin with the raw amino-acid sequence, 240 residues long: Homeobox protein DLX-4 (240 aa).

The segment at 80-120 (QPLCGPAEHPQELEADSEKPRLSPEPSERRPQAPAKKLRKP) is disordered. Over residues 88–110 (HPQELEADSEKPRLSPEPSERRP) the composition is skewed to basic and acidic residues. The segment at residues 117 to 176 (LRKPRTIYSSLQLQHLNQRFQHTQYLALPERAQLAAQLGLTQTQVKIWFQNKRSKYKKLL) is a DNA-binding region (homeobox).

Belongs to the distal-less homeobox family. As to expression, expressed in leukemia cells and placenta. Also expressed in kidney and fetal liver.

The protein localises to the nucleus. Its function is as follows. May play a role in determining the production of hemoglobin S. May act as a repressor. During embryonic development, plays a role in palatogenesis. The polypeptide is Homeobox protein DLX-4 (DLX4) (Homo sapiens (Human)).